Here is a 295-residue protein sequence, read N- to C-terminus: Pyridoxal 5'-phosphate synthase subunit PdxS (295 aa).

Asp-25 lines the D-ribose 5-phosphate pocket. Lys-82 functions as the Schiff-base intermediate with D-ribose 5-phosphate in the catalytic mechanism. Gly-154 contacts D-ribose 5-phosphate. Arg-166 is a binding site for D-glyceraldehyde 3-phosphate. D-ribose 5-phosphate-binding positions include Gly-215 and 236–237; that span reads GS.

This sequence belongs to the PdxS/SNZ family. In the presence of PdxT, forms a dodecamer of heterodimers.

It catalyses the reaction aldehydo-D-ribose 5-phosphate + D-glyceraldehyde 3-phosphate + L-glutamine = pyridoxal 5'-phosphate + L-glutamate + phosphate + 3 H2O + H(+). Its pathway is cofactor biosynthesis; pyridoxal 5'-phosphate biosynthesis. In terms of biological role, catalyzes the formation of pyridoxal 5'-phosphate from ribose 5-phosphate (RBP), glyceraldehyde 3-phosphate (G3P) and ammonia. The ammonia is provided by the PdxT subunit. Can also use ribulose 5-phosphate and dihydroxyacetone phosphate as substrates, resulting from enzyme-catalyzed isomerization of RBP and G3P, respectively. The sequence is that of Pyridoxal 5'-phosphate synthase subunit PdxS from Listeria monocytogenes serotype 4b (strain CLIP80459).